A 131-amino-acid polypeptide reads, in one-letter code: Agouti-related protein (131 aa).

The first 20 residues, 1–20 (MLTAMLLSCVLLLALPPTLG), serve as a signal peptide directing secretion. Residues 21-81 (VQMGVAPLKG…VLDPQNRESR (61 aa)) constitute a propeptide that is removed on maturation. Cystine bridges form between Cys-86–Cys-101, Cys-93–Cys-107, Cys-100–Cys-118, Cys-104–Cys-128, and Cys-109–Cys-116. An Agouti domain is found at 86 to 128 (CVRLHESCLGQQVPCCDPCATCYCRFFNAFCYCRKLGTATNLC). Positions 110–112 (RFF) are interaction with melanocortin receptors.

In terms of assembly, interacts with melanocortin receptors MC3R, MC4R and MC5R. Expressed in arcuate nucleus and median eminence, adrenal gland (medulla), hypothalamus, testis, and lung.

Its subcellular location is the secreted. It is found in the golgi apparatus lumen. Its function is as follows. Plays a role in weight homeostasis. Involved in the control of feeding behavior through the central melanocortin system. Acts as alpha melanocyte-stimulating hormone antagonist by inhibiting cAMP production mediated by stimulation of melanocortin receptors within the hypothalamus and adrenal gland. Has very low activity with MC5R. Is an inverse agonist for MC3R and MC4R being able to suppress their constitutive activity. It promotes MC3R and MC4R endocytosis in an arrestin-dependent manner. In Mus musculus (Mouse), this protein is Agouti-related protein (Agrp).